Reading from the N-terminus, the 143-residue chain is 6,7-dimethyl-8-ribityllumazine synthase (143 aa).

5-amino-6-(D-ribitylamino)uracil contacts are provided by residues tryptophan 10, 44-46 (SFE), and 68-70 (CVI). 73-74 (DT) contacts (2S)-2-hydroxy-3-oxobutyl phosphate. The active-site Proton donor is histidine 76. Tyrosine 101 is a 5-amino-6-(D-ribitylamino)uracil binding site. A (2S)-2-hydroxy-3-oxobutyl phosphate-binding site is contributed by arginine 115.

This sequence belongs to the DMRL synthase family.

It carries out the reaction (2S)-2-hydroxy-3-oxobutyl phosphate + 5-amino-6-(D-ribitylamino)uracil = 6,7-dimethyl-8-(1-D-ribityl)lumazine + phosphate + 2 H2O + H(+). The protein operates within cofactor biosynthesis; riboflavin biosynthesis; riboflavin from 2-hydroxy-3-oxobutyl phosphate and 5-amino-6-(D-ribitylamino)uracil: step 1/2. Catalyzes the formation of 6,7-dimethyl-8-ribityllumazine by condensation of 5-amino-6-(D-ribitylamino)uracil with 3,4-dihydroxy-2-butanone 4-phosphate. This is the penultimate step in the biosynthesis of riboflavin. In Bacteroides fragilis (strain YCH46), this protein is 6,7-dimethyl-8-ribityllumazine synthase.